The following is a 142-amino-acid chain: Large-conductance mechanosensitive channel (142 aa).

The next 3 membrane-spanning stretches (helical) occupy residues 14–34, 38–58, and 82–102; these read VMDL…VDSV, LVMP…NYFL, and GNFI…FLLI.

The protein belongs to the MscL family. As to quaternary structure, homopentamer.

The protein resides in the cell inner membrane. In terms of biological role, channel that opens in response to stretch forces in the membrane lipid bilayer. May participate in the regulation of osmotic pressure changes within the cell. This chain is Large-conductance mechanosensitive channel, found in Rhizobium meliloti (strain 1021) (Ensifer meliloti).